The primary structure comprises 441 residues: Chromosome partition protein MukF (441 aa).

The segment at 208–236 (LTETSSTLRELQDTLEAAGDKLQTSLLSI) is leucine-zipper.

Belongs to the MukF family. As to quaternary structure, interacts, and probably forms a ternary complex, with MukE and MukB via its C-terminal region. The complex formation is stimulated by calcium or magnesium. It is required for an interaction between MukE and MukB.

It localises to the cytoplasm. The protein localises to the nucleoid. Functionally, involved in chromosome condensation, segregation and cell cycle progression. May participate in facilitating chromosome segregation by condensation DNA from both sides of a centrally located replisome during cell division. Not required for mini-F plasmid partitioning. Probably acts via its interaction with MukB and MukE. Overexpression results in anucleate cells. It has a calcium binding activity. The protein is Chromosome partition protein MukF of Pectobacterium atrosepticum (strain SCRI 1043 / ATCC BAA-672) (Erwinia carotovora subsp. atroseptica).